Reading from the N-terminus, the 255-residue chain is 2-(S)-hydroxypropyl-CoM dehydrogenase 3 (255 aa).

NAD(+) is bound by residues isoleucine 19, aspartate 38, 64–65 (DV), and asparagine 91. Residues serine 143 and tyrosine 156 each coordinate (S)-2-hydroxypropyl-coenzyme M. Tyrosine 156 (proton acceptor) is an active-site residue. NAD(+) is bound at residue lysine 160. Residue threonine 188 participates in (S)-2-hydroxypropyl-coenzyme M binding. 189 to 193 (VTSTG) lines the NAD(+) pocket. Tyrosine 215 provides a ligand contact to (S)-2-hydroxypropyl-coenzyme M.

The protein belongs to the short-chain dehydrogenases/reductases (SDR) family. Homotetramer.

The enzyme catalyses (S)-2-hydroxypropyl-coenzyme M + NAD(+) = 2-oxopropyl-coenzyme M + NADH + H(+). Not inhibited by 2-(2-methyl-2-hydroxypropylthio)ethanesulfonate (M-HPC), an achiral analog of both R-HPC and S-HPC. Functionally, involved in aliphatic epoxide carboxylation. Catalyzes the reversible oxidation of (2S)-2-hydroxypropyl-coenzyme M (S-HPC) to 2-oxopropyl-coenzyme M (2-KPC). The enzyme is highly specific for the S enantiomers. In vitro can also use the aliphatic ketone 2-butanone and the aliphatic alcohol 2-propanol, and shows an inherent stereoselectivity for 2-butanone reduction. This is 2-(S)-hydroxypropyl-CoM dehydrogenase 3 from Xanthobacter autotrophicus (strain ATCC BAA-1158 / Py2).